A 450-amino-acid polypeptide reads, in one-letter code: tRNA-2-methylthio-N(6)-dimethylallyladenosine synthase (450 aa).

Residues 14–132 (GEFFIETWGC…FPNYLNEVKK (119 aa)) enclose the MTTase N-terminal domain. Residues C23, C59, C93, C169, C173, and C176 each coordinate [4Fe-4S] cluster. Positions 155-385 (RKNSMKAFVT…VEVVNEISAK (231 aa)) constitute a Radical SAM core domain. The TRAM domain occupies 388–450 (KAYEGKIEEV…NSFSLTGEEI (63 aa)).

It belongs to the methylthiotransferase family. MiaB subfamily. As to quaternary structure, monomer. [4Fe-4S] cluster serves as cofactor.

The protein resides in the cytoplasm. The catalysed reaction is N(6)-dimethylallyladenosine(37) in tRNA + (sulfur carrier)-SH + AH2 + 2 S-adenosyl-L-methionine = 2-methylsulfanyl-N(6)-dimethylallyladenosine(37) in tRNA + (sulfur carrier)-H + 5'-deoxyadenosine + L-methionine + A + S-adenosyl-L-homocysteine + 2 H(+). Catalyzes the methylthiolation of N6-(dimethylallyl)adenosine (i(6)A), leading to the formation of 2-methylthio-N6-(dimethylallyl)adenosine (ms(2)i(6)A) at position 37 in tRNAs that read codons beginning with uridine. This chain is tRNA-2-methylthio-N(6)-dimethylallyladenosine synthase, found in Clostridium botulinum (strain Loch Maree / Type A3).